The sequence spans 423 residues: Cytochrome b mRNA maturase bI2 (423 aa).

Over 1–31 (MAFRKSNVYLSLVNSYIIDSPQPSSINYWWN) the chain is Mitochondrial matrix. Residues 1–143 (MAFRKSNVYL…CVYGQMSHWG (143 aa)) are cytochrome b. A helical membrane pass occupies residues 32-52 (MGSLLGLCLVIQIVTGIFMAM). Over 53–84 (HYSSNIELAFSSVEHIMRDVHNGYILRYLHAN) the chain is Mitochondrial intermembrane. Residues 85 to 105 (GASFFFMVMFMHMAKGLYYGS) traverse the membrane as a helical segment. The Mitochondrial matrix portion of the chain corresponds to 106–115 (YRSPRVTLWN). Residues 116–136 (VGVIIFILTIATAFLGYCCVY) form a helical membrane-spanning segment. Residues 137-153 (GQMSHWGNMNIASNMFN) are Mitochondrial intermembrane-facing. The interval 144-423 (NMNIASNMFN…SMKYKLGNYL (280 aa)) is maturase. Residues 154–174 (MMKTIYMMMLMLLIYIFYTIM) form a helical membrane-spanning segment. At 175–423 (MRQMMKTKEY…SMKYKLGNYL (249 aa)) the chain is on the mitochondrial matrix side.

It in the N-terminal section; belongs to the cytochrome b family. In the C-terminal section; belongs to the LAGLIDADG endonuclease family.

The protein localises to the mitochondrion inner membrane. Its function is as follows. This protein is responsible for splicing and maturation of cytochrome b mRNA. Specifically, it may be responsible for the splicing specificity of the second intron. The chain is Cytochrome b mRNA maturase bI2 (BI2) from Saccharomyces cerevisiae (strain ATCC 204508 / S288c) (Baker's yeast).